We begin with the raw amino-acid sequence, 338 residues long: MIIALDAMGGDFAPASTVEGAIFAAKESKHKILLVGIEKILVGELLKYRGRYDLKSLNIEIINATEFITMDEHPAKAVRQKKDSSLSVCARLVADGKADAFVSMGNSGAAMSAALFYLKRIEGVLRPAISTVFPNFGGHCIIADMGANVDCTPEYLLQFGIMASLFCEKVASVENPRVGLVSIGEESTKGNELTLAAFELLKKADINFIGNVEGRDIPGGKVDVAICDGFVGNVILKLGEGLTEMMLKLIRKEFKQHPMTWASLPFLWLAIKDLRKRVDYSEFGGAPLLGVEGVCIIGHGSSNGKAVKNAIFAGAETAKHNIAAGIKEAILRYNNKVV.

Belongs to the PlsX family. Homodimer. Probably interacts with PlsY.

The protein resides in the cytoplasm. It carries out the reaction a fatty acyl-[ACP] + phosphate = an acyl phosphate + holo-[ACP]. Its pathway is lipid metabolism; phospholipid metabolism. Its function is as follows. Catalyzes the reversible formation of acyl-phosphate (acyl-PO(4)) from acyl-[acyl-carrier-protein] (acyl-ACP). This enzyme utilizes acyl-ACP as fatty acyl donor, but not acyl-CoA. This Endomicrobium trichonymphae protein is Phosphate acyltransferase.